Consider the following 207-residue polypeptide: Large ribosomal subunit protein uL4 (207 aa).

The interval 47-78 (GTHKVKNRSEVRGGGRKPWRQKGTGRARQGSI) is disordered. Positions 60 to 71 (GGRKPWRQKGTG) are enriched in basic residues.

The protein belongs to the universal ribosomal protein uL4 family. In terms of assembly, part of the 50S ribosomal subunit.

Its function is as follows. One of the primary rRNA binding proteins, this protein initially binds near the 5'-end of the 23S rRNA. It is important during the early stages of 50S assembly. It makes multiple contacts with different domains of the 23S rRNA in the assembled 50S subunit and ribosome. In terms of biological role, forms part of the polypeptide exit tunnel. The polypeptide is Large ribosomal subunit protein uL4 (Listeria innocua serovar 6a (strain ATCC BAA-680 / CLIP 11262)).